A 201-amino-acid chain; its full sequence is Phospholipase A2 inhibitor NAI (201 aa).

An N-terminal signal peptide occupies residues 1–19 (MKSLQIICLLFVLVARGSC). Cystine bridges form between Cys-22–Cys-47, Cys-25–Cys-32, Cys-40–Cys-68, Cys-74–Cys-95, Cys-96–Cys-101, Cys-119–Cys-144, Cys-137–Cys-166, and Cys-170–Cys-191. A glycan (N-linked (GlcNAc...) asparagine) is linked at Asn-176.

This sequence belongs to the CNF-like-inhibitor family. Heterotrimer of 2 subunits A and 1 subunit B; non-covalently linked. In terms of processing, N-glycosylated, probably by biantennary structure. Glycosylation does not change PLA2 inhibitory activity. As to expression, expressed by the liver.

Its subcellular location is the secreted. Functionally, inhibits the enzymatic activity of all phospholipase A2 tested, binding them with micromole to nanomole affinity. In Notechis ater (Black tiger snake), this protein is Phospholipase A2 inhibitor NAI.